A 439-amino-acid chain; its full sequence is GTPase Der (439 aa).

EngA-type G domains follow at residues 2 to 167 and 182 to 358; these read PTVL…ESKG and IRVS…KSLH. GTP-binding positions include 8 to 15, 55 to 59, 118 to 121, 188 to 195, 235 to 239, and 301 to 304; these read GKSNVGKS, DTGGI, NKSE, GRPNAGKS, DTAGL, and NKID. The region spanning 359 to 439 is the KH-like domain; sequence YRVQTSAVNS…PIFLKFKSRH (81 aa).

Belongs to the TRAFAC class TrmE-Era-EngA-EngB-Septin-like GTPase superfamily. EngA (Der) GTPase family. As to quaternary structure, associates with the 50S ribosomal subunit.

Its function is as follows. GTPase that plays an essential role in the late steps of ribosome biogenesis. The sequence is that of GTPase Der from Thermosipho africanus (strain TCF52B).